A 112-amino-acid polypeptide reads, in one-letter code: T cell receptor alpha variable 17 (112 aa).

The first 21 residues, 1–21 (METLLGVSLVILWLQLARVNS), serve as a signal peptide directing secretion. In terms of domain architecture, Ig-like spans 22–112 (QQGEEDPQAL…DTASYFCATD (91 aa)). Asparagine 38 and asparagine 42 each carry an N-linked (GlcNAc...) asparagine glycan. A disulfide bridge links cysteine 43 with cysteine 109.

Alpha-beta TR is a heterodimer composed of an alpha and beta chain; disulfide-linked. The alpha-beta TR is associated with the transmembrane signaling CD3 coreceptor proteins to form the TR-CD3 (TcR or TCR). The assembly of alpha-beta TR heterodimers with CD3 occurs in the endoplasmic reticulum where a single alpha-beta TR heterodimer associates with one CD3D-CD3E heterodimer, one CD3G-CD3E heterodimer and one CD247 homodimer forming a stable octameric structure. CD3D-CD3E and CD3G-CD3E heterodimers preferentially associate with TR alpha and TR beta chains, respectively. The association of the CD247 homodimer is the last step of TcR assembly in the endoplasmic reticulum and is required for transport to the cell surface.

The protein resides in the cell membrane. Functionally, v region of the variable domain of T cell receptor (TR) alpha chain that participates in the antigen recognition. Alpha-beta T cell receptors are antigen specific receptors which are essential to the immune response and are present on the cell surface of T lymphocytes. Recognize peptide-major histocompatibility (MH) (pMH) complexes that are displayed by antigen presenting cells (APC), a prerequisite for efficient T cell adaptive immunity against pathogens. Binding of alpha-beta TR to pMH complex initiates TR-CD3 clustering on the cell surface and intracellular activation of LCK that phosphorylates the ITAM motifs of CD3G, CD3D, CD3E and CD247 enabling the recruitment of ZAP70. In turn ZAP70 phosphorylates LAT, which recruits numerous signaling molecules to form the LAT signalosome. The LAT signalosome propagates signal branching to three major signaling pathways, the calcium, the mitogen-activated protein kinase (MAPK) kinase and the nuclear factor NF-kappa-B (NF-kB) pathways, leading to the mobilization of transcription factors that are critical for gene expression and essential for T cell growth and differentiation. The T cell repertoire is generated in the thymus, by V-(D)-J rearrangement. This repertoire is then shaped by intrathymic selection events to generate a peripheral T cell pool of self-MH restricted, non-autoaggressive T cells. Post-thymic interaction of alpha-beta TR with the pMH complexes shapes TR structural and functional avidity. The sequence is that of T cell receptor alpha variable 17 from Homo sapiens (Human).